The sequence spans 366 residues: Aminomethyltransferase (366 aa).

Belongs to the GcvT family. In terms of assembly, the glycine cleavage system is composed of four proteins: P, T, L and H.

The enzyme catalyses N(6)-[(R)-S(8)-aminomethyldihydrolipoyl]-L-lysyl-[protein] + (6S)-5,6,7,8-tetrahydrofolate = N(6)-[(R)-dihydrolipoyl]-L-lysyl-[protein] + (6R)-5,10-methylene-5,6,7,8-tetrahydrofolate + NH4(+). The glycine cleavage system catalyzes the degradation of glycine. The polypeptide is Aminomethyltransferase (Bordetella pertussis (strain Tohama I / ATCC BAA-589 / NCTC 13251)).